The following is a 211-amino-acid chain: Ribonuclease HII (211 aa).

The RNase H type-2 domain maps to 17–211; it reads FLSAGVDEVG…CQPSLFEVRS (195 aa). 3 residues coordinate a divalent metal cation: Asp23, Glu24, and Asp119.

It belongs to the RNase HII family. Mn(2+) serves as cofactor. Requires Mg(2+) as cofactor.

The protein resides in the cytoplasm. It carries out the reaction Endonucleolytic cleavage to 5'-phosphomonoester.. Its function is as follows. Endonuclease that specifically degrades the RNA of RNA-DNA hybrids. In Trichodesmium erythraeum (strain IMS101), this protein is Ribonuclease HII.